Reading from the N-terminus, the 63-residue chain is Venom peptide 2b (63 aa).

The first 22 residues, 1 to 22 (MRGTSFILFAVVVILGFLHGNA), serve as a signal peptide directing secretion. AXPX repeat units lie at residues 22–25 (AEPL), 26–29 (ANPE), 32–35 (ANPD), 38–41 (ANPD), and 44–47 (ANPE). A propeptide spanning residues 23-48 (EPLANPEPSANPDPLANPDPLANPEA) is cleaved from the precursor. Residue L62 is modified to Leucine amide.

Belongs to the MCD family. Mastoparan subfamily. In terms of tissue distribution, expressed by the venom gland.

It is found in the secreted. It localises to the target cell membrane. Antimicrobial peptide with strong and moderate activity against the fungi B.cinerea (MIC=5 uM) and C.albicans (MIC=100 uM), the Gram-negative bacterium E.coli (MIC=200 uM) and the Gram-positive bacterium S.aureus (MIC=25 uM). Shows cytolytic activity against insect cell lines. Has potent hemolytic activity against human erythrocytes (EC(50)=64 uM). In vivo, peptide injection in the vicinity of the head and thorax of lepidopteran larvae induces feeding disorder followed by death due to starvation. The protein is Venom peptide 2b of Eumenes pomiformis (Potter wasp).